An 800-amino-acid chain; its full sequence is Cell division cycle 5-like protein (800 aa).

HTH myb-type domains are found at residues 1–56 (MRNV…DPSI) and 57–106 (KKTE…DEVQ). 2 consecutive DNA-binding regions (H-T-H motif) follow at residues 29-52 (WARISSLLTRKSPAQCKARWHEWL) and 80-102 (WKTIAPLVGRTASQCLERYNRLL). 4 disordered regions span residues 109-186 (QDNE…KRKF), 334-378 (YEKL…NIRT), 399-445 (QTPL…KQSL), and 571-610 (NKTFPNDSITPSSTFDDDDDDDNHHHHHDDIDNNSINDND). Over residues 113–122 (NGGGSGGGGT) the composition is skewed to gly residues. Over residues 133 to 142 (NDPRRLRMGD) the composition is skewed to basic and acidic residues. Residues 340-351 (SGSGGGSGGVGV) show a composition bias toward gly residues. Residues 361–376 (TASISSTAANNNTNNI) show a composition bias toward low complexity. Composition is skewed to polar residues over residues 409-445 (NVSQTPLPKSVNNSTPFRTPNPLANQTPTQHNKKQSL) and 573-584 (TFPNDSITPSST). Residues 592 to 601 (DNHHHHHDDI) show a composition bias toward basic and acidic residues. 2 coiled-coil regions span residues 621-700 (NTEL…KIKN) and 748-800 (VALK…LSIF).

This sequence belongs to the CEF1 family. In terms of assembly, component of the precatalytic, catalytic and postcatalytic spliceosome complexes.

It is found in the nucleus. It localises to the cytoplasm. Functionally, DNA-binding protein involved in cell cycle control. May act as a transcription activator. Plays a role in pre-mRNA splicing as core component of precatalytic, catalytic and postcatalytic spliceosomal complexes. May also play a role in the response to DNA damage (DDR). This is Cell division cycle 5-like protein (cdc5l) from Dictyostelium discoideum (Social amoeba).